We begin with the raw amino-acid sequence, 324 residues long: NADH-ubiquinone oxidoreductase chain 1 (324 aa).

8 helical membrane-spanning segments follow: residues 10–30 (MIMTLSYMIPILIAVAFLTLV), 76–96 (FLFILTPILALLLALTIWTPL), 107–127 (LGLLFLLAMSSLTVYSLLWSG), 143–163 (VAQTISYEVTLAIILLSTIML), 178–198 (PMYLIFSSWPLTMMWYISTLA), 229–249 (LFFLAEYANIMLMNTLTITLF), 260–280 (ELFSITLATKVLLLSSSFLWI), and 300–320 (FLPLTLAMCLWHTSMPISYAG).

This sequence belongs to the complex I subunit 1 family.

The protein resides in the mitochondrion inner membrane. It catalyses the reaction a ubiquinone + NADH + 5 H(+)(in) = a ubiquinol + NAD(+) + 4 H(+)(out). In terms of biological role, core subunit of the mitochondrial membrane respiratory chain NADH dehydrogenase (Complex I) that is believed to belong to the minimal assembly required for catalysis. Complex I functions in the transfer of electrons from NADH to the respiratory chain. The immediate electron acceptor for the enzyme is believed to be ubiquinone. This Coturnix japonica (Japanese quail) protein is NADH-ubiquinone oxidoreductase chain 1 (MT-ND1).